Reading from the N-terminus, the 292-residue chain is 33 kDa chaperonin (292 aa).

2 cysteine pairs are disulfide-bonded: Cys237-Cys239 and Cys270-Cys273.

This sequence belongs to the HSP33 family. Under oxidizing conditions two disulfide bonds are formed involving the reactive cysteines. Under reducing conditions zinc is bound to the reactive cysteines and the protein is inactive.

The protein localises to the cytoplasm. In terms of biological role, redox regulated molecular chaperone. Protects both thermally unfolding and oxidatively damaged proteins from irreversible aggregation. Plays an important role in the bacterial defense system toward oxidative stress. This is 33 kDa chaperonin from Lachnoclostridium phytofermentans (strain ATCC 700394 / DSM 18823 / ISDg) (Clostridium phytofermentans).